Here is a 274-residue protein sequence, read N- to C-terminus: 2-dehydro-3-deoxyphosphooctonate aldolase (274 aa).

It belongs to the KdsA family.

Its subcellular location is the cytoplasm. The catalysed reaction is D-arabinose 5-phosphate + phosphoenolpyruvate + H2O = 3-deoxy-alpha-D-manno-2-octulosonate-8-phosphate + phosphate. Its pathway is carbohydrate biosynthesis; 3-deoxy-D-manno-octulosonate biosynthesis; 3-deoxy-D-manno-octulosonate from D-ribulose 5-phosphate: step 2/3. It participates in bacterial outer membrane biogenesis; lipopolysaccharide biosynthesis. In Rickettsia rickettsii (strain Iowa), this protein is 2-dehydro-3-deoxyphosphooctonate aldolase.